A 320-amino-acid polypeptide reads, in one-letter code: Aminoacyl tRNA synthase complex-interacting multifunctional protein 2 (320 aa).

Residues 31–52 (HSKTTSPATDAGHVQETSEPSL) form a disordered region. Residue serine 36 is modified to Phosphoserine. The interval 82–162 (TPDADLDVTN…HTHSSVKNVP (81 aa)) is interaction with PRKN. An interaction with TP53 region spans residues 162 to 225 (PENLLKCFGE…FLFSLFGQKH (64 aa)). Positions 220–317 (LFGQKHSAVN…NLVPFSTALQ (98 aa)) constitute a GST C-terminal domain.

In terms of assembly, part of the multisynthetase complex (MSC), a multisubunit complex that groups tRNA ligases for Arg (RARS1), Asp (DARS1), Gln (QARS1), Ile (IARS1), Leu (LARS1), Lys (KARS1), Met (MARS1) the bifunctional ligase for Glu and Pro (EPRS1) and the auxiliary subunits AIMP1/p43, AIMP2/p38 and EEF1E1/p18. Interacts (via N-terminus) with KARS1. Interacts with EPRS1. Forms a linear complex that contains MARS1, EEF1E1, EPRS1 and AIMP2 that is at the core of the multisubunit complex. Binds FUBP1 (via C-terminus). Interacts in both its unphosphorylated and phosphorylated forms with p53/TP53 (via N-terminus) in the nucleus following UV irradiation. Interacts (via N-terminus) with PRKN/parkin (via first RING-type domain). Interacts with TARS3. Post-translationally, phosphorylated on serine residues in response to UV irradiation. In terms of processing, ubiquitinated by PRKN, leading to its degradation by the proteasome.

It is found in the cytoplasm. It localises to the cytosol. The protein resides in the nucleus. Required for assembly and stability of the aminoacyl-tRNA synthase complex. Mediates ubiquitination and degradation of FUBP1, a transcriptional activator of MYC, leading to MYC down-regulation which is required for aveolar type II cell differentiation. Blocks MDM2-mediated ubiquitination and degradation of p53/TP53. Functions as a proapoptotic factor. This Cricetulus griseus (Chinese hamster) protein is Aminoacyl tRNA synthase complex-interacting multifunctional protein 2 (AIMP2).